The sequence spans 523 residues: 2-isopropylmalate synthase (523 aa).

The Pyruvate carboxyltransferase domain maps to 5-267 (VIIFDTTLRD…HTAINHQEIW (263 aa)). 4 residues coordinate Mn(2+): D14, H202, H204, and N238. The regulatory domain stretch occupies residues 392–523 (RLDYFSVQSG…QHNENNKETV (132 aa)).

It belongs to the alpha-IPM synthase/homocitrate synthase family. LeuA type 1 subfamily. Homodimer. The cofactor is Mn(2+).

Its subcellular location is the cytoplasm. It catalyses the reaction 3-methyl-2-oxobutanoate + acetyl-CoA + H2O = (2S)-2-isopropylmalate + CoA + H(+). The protein operates within amino-acid biosynthesis; L-leucine biosynthesis; L-leucine from 3-methyl-2-oxobutanoate: step 1/4. Functionally, catalyzes the condensation of the acetyl group of acetyl-CoA with 3-methyl-2-oxobutanoate (2-ketoisovalerate) to form 3-carboxy-3-hydroxy-4-methylpentanoate (2-isopropylmalate). The protein is 2-isopropylmalate synthase of Escherichia coli O45:K1 (strain S88 / ExPEC).